A 360-amino-acid polypeptide reads, in one-letter code: Ribosomal RNA large subunit methyltransferase M (360 aa).

S-adenosyl-L-methionine-binding positions include S190, 223–226, D242, D262, and D280; that span reads CPGG. K309 (proton acceptor) is an active-site residue.

This sequence belongs to the class I-like SAM-binding methyltransferase superfamily. RNA methyltransferase RlmE family. RlmM subfamily. In terms of assembly, monomer.

Its subcellular location is the cytoplasm. The enzyme catalyses cytidine(2498) in 23S rRNA + S-adenosyl-L-methionine = 2'-O-methylcytidine(2498) in 23S rRNA + S-adenosyl-L-homocysteine + H(+). Functionally, catalyzes the 2'-O-methylation at nucleotide C2498 in 23S rRNA. The polypeptide is Ribosomal RNA large subunit methyltransferase M (Haemophilus ducreyi (strain 35000HP / ATCC 700724)).